The following is a 39-amino-acid chain: uncharacterized protein (39 aa).

Belongs to the asfivirus C84L family.

This is an uncharacterized protein from African swine fever virus (isolate Warthog/Namibia/Wart80/1980) (ASFV).